Reading from the N-terminus, the 583-residue chain is Probable phosphoglucomutase, cytoplasmic 1 (583 aa).

Alpha-D-glucose 1,6-bisphosphate-binding residues include Arg24 and Ser123. Ser123 acts as the Phosphoserine intermediate in catalysis. Residues Ser123, Asp299, Asp301, and Asp303 each contribute to the Mg(2+) site. Ser123 carries the post-translational modification Phosphoserine. Residues Asp303, Arg304, Thr367, Glu386, Ser388, and Lys399 each contribute to the alpha-D-glucose 1,6-bisphosphate site.

The protein belongs to the phosphohexose mutase family. Monomer. The cofactor is Mg(2+).

Its subcellular location is the cytoplasm. It carries out the reaction alpha-D-glucose 1-phosphate = alpha-D-glucose 6-phosphate. It catalyses the reaction O-phospho-L-seryl-[protein] + alpha-D-glucose 1-phosphate = alpha-D-glucose 1,6-bisphosphate + L-seryl-[protein]. The catalysed reaction is alpha-D-glucose 1,6-bisphosphate + L-seryl-[protein] = O-phospho-L-seryl-[protein] + alpha-D-glucose 6-phosphate. Functionally, catalyzes the reversible isomerization of alpha-D-glucose 1-phosphate to alpha-D-glucose 6-phosphate. The mechanism proceeds via the intermediate compound alpha-D-glucose 1,6-bisphosphate. This enzyme participates in both the breakdown and synthesis of glucose. In Arabidopsis thaliana (Mouse-ear cress), this protein is Probable phosphoglucomutase, cytoplasmic 1.